Reading from the N-terminus, the 465-residue chain is Gamma-aminobutyric acid receptor subunit gamma-1 (465 aa).

Residues 1–20 form the signal peptide; the sequence is MGSGKAFLFSPSLLWSQTRG. Residues 21–273 are Extracellular-facing; the sequence is VRLIFLLLTL…FDLSRRMGYF (253 aa). Residues asparagine 50 and asparagine 127 are each glycosylated (N-linked (GlcNAc...) asparagine). Cysteine 188 and cysteine 202 are oxidised to a cystine. Residue asparagine 245 is glycosylated (N-linked (GlcNAc...) asparagine). A helical membrane pass occupies residues 274–294; the sequence is TIQTYIPCILTVVLSWVSFWI. At 295–300 the chain is on the cytoplasmic side; sequence NKDAVP. Residues 301 to 320 form a helical membrane-spanning segment; the sequence is ARTSLGITTVLTMTTLSTIA. The Extracellular segment spans residues 321 to 328; it reads RKSLPKVS. Residues 329–349 form a helical membrane-spanning segment; that stretch reads YVTAMDLFVSVCFIFVFAALM. Residues 350 to 444 lie on the Cytoplasmic side of the membrane; that stretch reads EYGTLHYFTS…RIAKIDSYSR (95 aa). The helical transmembrane segment at 445–465 threads the bilayer; sequence IFFPTAFALFNLVYWVGYLYL.

This sequence belongs to the ligand-gated ion channel (TC 1.A.9) family. Gamma-aminobutyric acid receptor (TC 1.A.9.5) subfamily. GABRG1 sub-subfamily. As to quaternary structure, heteropentamer, formed by a combination of alpha (GABRA1-6), beta (GABRB1-3), gamma (GABRG1-3), delta (GABRD), epsilon (GABRE), rho (GABRR1-3), pi (GABRP) and theta (GABRQ) chains, each subunit exhibiting distinct physiological and pharmacological properties. May be palmitoylated. In terms of tissue distribution, expressed in brain.

It localises to the postsynaptic cell membrane. The protein localises to the cell membrane. The catalysed reaction is chloride(in) = chloride(out). Gamma subunit of the heteropentameric ligand-gated chloride channel gated by gamma-aminobutyric acid (GABA), a major inhibitory neurotransmitter in the brain. GABA-gated chloride channels, also named GABA(A) receptors (GABAAR), consist of five subunits arranged around a central pore and contain GABA active binding site(s) located at the alpha and beta subunit interface(s). When activated by GABA, GABAARs selectively allow the flow of chloride anions across the cell membrane down their electrochemical gradient. Chloride influx into the postsynaptic neuron following GABAAR opening decreases the neuron ability to generate a new action potential, thereby reducing nerve transmission. This is Gamma-aminobutyric acid receptor subunit gamma-1 from Mus musculus (Mouse).